A 358-amino-acid chain; its full sequence is MSTYNVAVLPGDGIGPEVMAEAIKVLDKVQAKFGFKLNFTQYLVGGAAIDAKGEPLPAETLQGCDNADAILFGSVGGPKWTHLPPDQQPERGALLPLRKHFKLFCNLRPATLYKGLEKFCPLRADIAAKGFDMVVVRELTGGIYFGQPKGRDGEGSDTRAFDTEVYYKYEIERIARAAFDAAMKRRKQVTSVDKANVLQSSILWRETVAEIAKEYPEVQVENMYIDNATMQLIKAPESFDVLLCSNIFGDIISDEAAMITGSMGMLPSASLNEEGFGLYEPAGGSAPDIAGKGIANPIAQILSAAMMLRYSFNLNEAATAIENAVQKVLADGHRTGDLADNSTPVSTAEMGTLIANAI.

77–90 (GPKWTHLPPDQQPE) is a binding site for NAD(+). Substrate contacts are provided by arginine 98, arginine 108, arginine 137, and aspartate 226. Mg(2+) is bound by residues aspartate 226, aspartate 250, and aspartate 254. 284–296 (GSAPDIAGKGIAN) serves as a coordination point for NAD(+).

This sequence belongs to the isocitrate and isopropylmalate dehydrogenases family. LeuB type 1 subfamily. Homodimer. Mg(2+) is required as a cofactor. Requires Mn(2+) as cofactor.

The protein resides in the cytoplasm. It catalyses the reaction (2R,3S)-3-isopropylmalate + NAD(+) = 4-methyl-2-oxopentanoate + CO2 + NADH. It participates in amino-acid biosynthesis; L-leucine biosynthesis; L-leucine from 3-methyl-2-oxobutanoate: step 3/4. Its function is as follows. Catalyzes the oxidation of 3-carboxy-2-hydroxy-4-methylpentanoate (3-isopropylmalate) to 3-carboxy-4-methyl-2-oxopentanoate. The product decarboxylates to 4-methyl-2 oxopentanoate. The sequence is that of 3-isopropylmalate dehydrogenase from Mannheimia succiniciproducens (strain KCTC 0769BP / MBEL55E).